The sequence spans 814 residues: Phenylalanine--tRNA ligase beta subunit (814 aa).

The tRNA-binding domain occupies 39–153; the sequence is SKNVNGVVLG…LKHELGTPVS (115 aa). Positions 414 to 500 constitute a B5 domain; the sequence is NEDIFIKLRR…RLIGYDRFDL (87 aa). Mg(2+) is bound by residues Asp-478, Asp-484, Glu-487, and Glu-488. In terms of domain architecture, FDX-ACB spans 720–813; the sequence is PIVPKIERDI…IEKSFQTKLR (94 aa).

The protein belongs to the phenylalanyl-tRNA synthetase beta subunit family. Type 1 subfamily. As to quaternary structure, tetramer of two alpha and two beta subunits. Requires Mg(2+) as cofactor.

Its subcellular location is the cytoplasm. It carries out the reaction tRNA(Phe) + L-phenylalanine + ATP = L-phenylalanyl-tRNA(Phe) + AMP + diphosphate + H(+). In Prochlorococcus marinus (strain MIT 9312), this protein is Phenylalanine--tRNA ligase beta subunit.